Reading from the N-terminus, the 161-residue chain is Protein OPG060 (161 aa).

It belongs to the orthopoxvirus OPG058 family.

This chain is Protein OPG060 (OPG060), found in Homo sapiens (Human).